The primary structure comprises 544 residues: Hydroxylamine reductase (544 aa).

[4Fe-4S] cluster-binding residues include cysteine 3, cysteine 6, cysteine 15, and cysteine 21. Histidine 244, glutamate 268, cysteine 313, cysteine 400, cysteine 428, cysteine 453, glutamate 487, and lysine 489 together coordinate hybrid [4Fe-2O-2S] cluster. Cysteine 400 is subject to Cysteine persulfide.

This sequence belongs to the HCP family. Requires [4Fe-4S] cluster as cofactor. Hybrid [4Fe-2O-2S] cluster is required as a cofactor.

It localises to the cytoplasm. The enzyme catalyses A + NH4(+) + H2O = hydroxylamine + AH2 + H(+). In terms of biological role, catalyzes the reduction of hydroxylamine to form NH(3) and H(2)O. The protein is Hydroxylamine reductase of Trichormus variabilis (strain ATCC 29413 / PCC 7937) (Anabaena variabilis).